Here is a 194-residue protein sequence, read N- to C-terminus: Large ribosomal subunit protein bL9 (194 aa).

It belongs to the bacterial ribosomal protein bL9 family.

Binds to the 23S rRNA. This chain is Large ribosomal subunit protein bL9, found in Rhodopseudomonas palustris (strain BisA53).